A 519-amino-acid chain; its full sequence is Cytosol aminopeptidase (519 aa).

Serine 42 is modified (phosphoserine). Lysine 45 bears the N6-succinyllysine mark. Serine 54 bears the Phosphoserine mark. N6-succinyllysine occurs at positions 61 and 103. Phosphoserine is present on residues serine 180 and serine 194. Positions 202, 203, and 205 each coordinate Zn(2+). The residue at position 221 (lysine 221) is an N6-acetyllysine; alternate. Lysine 221 is modified (N6-succinyllysine; alternate). The residue at position 238 (serine 238) is a Phosphoserine. Residues lysine 282 and aspartate 287 each coordinate Zn(2+). Substrate contacts are provided by lysine 282, aspartate 287, serine 292, and lysine 294. Position 287 (aspartate 287) interacts with Mg(2+). Lysine 294 is an active-site residue. Arginine 303, aspartate 305, aspartate 364, and glutamate 366 together coordinate Zn(2+). Positions 305 and 364 each coordinate substrate. Mg(2+) contacts are provided by aspartate 364 and glutamate 366. Residue arginine 368 is part of the active site. At lysine 455 the chain carries N6-acetyllysine; alternate. An N6-succinyllysine; alternate modification is found at lysine 455. An N6-succinyllysine modification is found at lysine 476. Lysine 489 carries the post-translational modification N6-acetyllysine; alternate. Position 489 is an N6-succinyllysine; alternate (lysine 489).

It belongs to the peptidase M17 family. In terms of assembly, homohexamer. Zn(2+) serves as cofactor. Mn(2+) is required as a cofactor.

The protein resides in the cytoplasm. The enzyme catalyses Release of an N-terminal amino acid, Xaa-|-Yaa-, in which Xaa is preferably Leu, but may be other amino acids including Pro although not Arg or Lys, and Yaa may be Pro. Amino acid amides and methyl esters are also readily hydrolyzed, but rates on arylamides are exceedingly low.. It carries out the reaction an S-substituted L-cysteinylglycine + H2O = an S-substituted L-cysteine + glycine. It catalyses the reaction L-cysteinylglycine + H2O = L-cysteine + glycine. The catalysed reaction is S-benzyl-L-cysteinylglycine + H2O = S-benzyl-L-cysteine + glycine. The enzyme catalyses Release of N-terminal proline from a peptide.. Its function is as follows. Cytosolic metallopeptidase that catalyzes the removal of unsubstituted N-terminal hydrophobic amino acids from various peptides. The presence of Zn(2+) ions is essential for the peptidase activity, and the association with other cofactors can modulate the substrate spectificity of the enzyme. For instance, in the presence of Mn(2+), it displays a specific Cys-Gly hydrolyzing activity of Cys-Gly-S-conjugates. Involved in the metabolism of glutathione and in the degradation of glutathione S-conjugates, which may play a role in the control of the cell redox status. This Sus scrofa (Pig) protein is Cytosol aminopeptidase.